Here is a 105-residue protein sequence, read N- to C-terminus: N(4)-acetylcytidine amidohydrolase (105 aa).

The 87-residue stretch at 7–93 folds into the ASCH domain; that stretch reads TFFERFEHDI…VIAEIYPGLE (87 aa). Lys21 serves as the catalytic Proton acceptor. The active-site Nucleophile is the Thr24. The active-site Proton donor is the Glu74.

This sequence belongs to the N(4)-acetylcytidine amidohydrolase family.

It catalyses the reaction N(4)-acetylcytidine + H2O = cytidine + acetate + H(+). The enzyme catalyses N(4)-acetyl-2'-deoxycytidine + H2O = 2'-deoxycytidine + acetate + H(+). The catalysed reaction is N(4)-acetylcytosine + H2O = cytosine + acetate + H(+). Functionally, catalyzes the hydrolysis of N(4)-acetylcytidine (ac4C). The chain is N(4)-acetylcytidine amidohydrolase from Shewanella baltica (strain OS185).